Reading from the N-terminus, the 426-residue chain is Tol-Pal system protein TolB (426 aa).

An N-terminal signal peptide occupies residues 1 to 24; that stretch reads MKLKSRFTSIIGVITLFFSQTVTA.

The protein belongs to the TolB family. In terms of assembly, the Tol-Pal system is composed of five core proteins: the inner membrane proteins TolA, TolQ and TolR, the periplasmic protein TolB and the outer membrane protein Pal. They form a network linking the inner and outer membranes and the peptidoglycan layer.

It localises to the periplasm. Its function is as follows. Part of the Tol-Pal system, which plays a role in outer membrane invagination during cell division and is important for maintaining outer membrane integrity. This chain is Tol-Pal system protein TolB, found in Actinobacillus pleuropneumoniae serotype 5b (strain L20).